The chain runs to 248 residues: Isopentenyl phosphate kinase (248 aa).

7–11 is an ATP binding site; that stretch reads KLGGS. A substrate-binding site is contributed by Gly49. Gly50 provides a ligand contact to ATP. Substrate contacts are provided by His54 and Gly152. ATP contacts are provided by Gly209 and Lys213.

Belongs to the isopentenyl phosphate kinase family. Homodimer.

It carries out the reaction isopentenyl phosphate + ATP = isopentenyl diphosphate + ADP. Its function is as follows. Catalyzes the phosphorylation of isopentenyl phosphate (IP) to isopentenyl diphosphate (IPP). Functions in an alternate mevalonate (MVA) pathway leading to IPP, a key precursor for the biosynthesis of isoprenoid compounds such as archaeal membrane lipids. The chain is Isopentenyl phosphate kinase from Haloferax volcanii (strain ATCC 29605 / DSM 3757 / JCM 8879 / NBRC 14742 / NCIMB 2012 / VKM B-1768 / DS2) (Halobacterium volcanii).